The chain runs to 297 residues: Zinc finger protein 784 (297 aa).

The segment covering 1-12 has biased composition (pro residues); that stretch reads MAAARPDPPIPS. The interval 1-39 is disordered; sequence MAAARPDPPIPSSPTRESPSPEPPDLVLVPDGRPVTPPG. Serine 13 is modified (phosphoserine). 3 C2H2-type zinc fingers span residues 64 to 86, 100 to 122, and 128 to 150; these read FHCA…EHGH, SRCH…YSLH, and YRCS…QHRH. Positions 149–175 are disordered; that stretch reads RHGVEPGTSERLLPTTTTGQPNSRVAQ. Residues 162–173 are compositionally biased toward polar residues; the sequence is PTTTTGQPNSRV. 3 consecutive C2H2-type zinc fingers follow at residues 195-217, 223-245, and 251-273; these read FACR…ERVH, YHCS…ARIH, and FRCM…QRTH. The segment at 268 to 297 is disordered; the sequence is KHQRTHFHGPGSGVGESRGQLRSSSVSQES. A compositionally biased stretch (polar residues) spans 287-297; it reads QLRSSSVSQES.

Belongs to the krueppel C2H2-type zinc-finger protein family.

It localises to the nucleus. Its function is as follows. May be involved in transcriptional regulation. The chain is Zinc finger protein 784 (Znf784) from Mus musculus (Mouse).